A 152-amino-acid polypeptide reads, in one-letter code: Ribonuclease H (152 aa).

The 142-residue stretch at 6–147 folds into the RNase H type-1 domain; the sequence is KKNNVIAYTD…ADELANKAIA (142 aa). Residues D15, E53, D75, and D139 each contribute to the Mg(2+) site.

The protein belongs to the RNase H family. In terms of assembly, monomer. Requires Mg(2+) as cofactor.

It is found in the cytoplasm. The catalysed reaction is Endonucleolytic cleavage to 5'-phosphomonoester.. Endonuclease that specifically degrades the RNA of RNA-DNA hybrids. The chain is Ribonuclease H from Francisella philomiragia subsp. philomiragia (strain ATCC 25017 / CCUG 19701 / FSC 153 / O#319-036).